Reading from the N-terminus, the 38-residue chain is Large ribosomal subunit protein bL36A (38 aa).

It belongs to the bacterial ribosomal protein bL36 family.

The chain is Large ribosomal subunit protein bL36A from Prochlorococcus marinus (strain MIT 9515).